The chain runs to 148 residues: C-C motif chemokine 2 (148 aa).

Positions 1–23 (MQVPVMLLGLLFTVAGWSIHVLA) are cleaved as a signal peptide. A Pyrrolidone carboxylic acid modification is found at Gln24. Disulfide bonds link Cys34-Cys59 and Cys35-Cys75. Asn126 carries an N-linked (GlcNAc...) asparagine glycan.

Belongs to the intercrine beta (chemokine CC) family. As to quaternary structure, monomer or homodimer; in equilibrium. Is tethered on endothelial cells by glycosaminoglycan (GAG) side chains of proteoglycans. Interacts with TNFAIP6 (via Link domain). Post-translationally, processing at the N-terminus can regulate receptor and target cell selectivity. Deletion of the N-terminal residue converts it from an activator of basophil to an eosinophil chemoattractant. N-Glycosylated.

Its subcellular location is the secreted. Acts as a ligand for C-C chemokine receptor CCR2. Signals through binding and activation of CCR2 and induces a strong chemotactic response and mobilization of intracellular calcium ions. Exhibits a chemotactic activity for monocytes and basophils but not neutrophils or eosinophils. Plays an important role in mediating peripheral nerve injury-induced neuropathic pain. Increases NMDA-mediated synaptic transmission in both dopamine D1 and D2 receptor-containing neurons, which may be caused by MAPK/ERK-dependent phosphorylation of GRIN2B/NMDAR2B. The chain is C-C motif chemokine 2 (Ccl2) from Mus musculus (Mouse).